Reading from the N-terminus, the 288-residue chain is Nucleotide-binding protein Neut_1559 (288 aa).

8 to 15 (GLSGSGKS) serves as a coordination point for ATP. 57–60 (DMRS) is a binding site for GTP.

This sequence belongs to the RapZ-like family.

In terms of biological role, displays ATPase and GTPase activities. This is Nucleotide-binding protein Neut_1559 from Nitrosomonas eutropha (strain DSM 101675 / C91 / Nm57).